We begin with the raw amino-acid sequence, 438 residues long: uncharacterized protein (438 aa).

12 helical membrane passes run 22-42, 59-79, 89-109, 137-157, 174-194, 237-257, 258-278, 292-312, 330-350, 356-376, 380-400, and 418-438; these read VSPI…GGFG, SAAL…AGLF, IVKG…MLIA, MVMA…TPWG, FFVP…FLAF, LIYL…LGTK, HPSV…YPNV, AITV…LSGT, MGGF…FVLS, FGMV…PVEI, SIMG…VLLV, and AVIT…ITIL.

Belongs to the CitM (TC 2.A.11) transporter family.

It is found in the cell membrane. Functionally, transports the free citrate anion. This is an uncharacterized protein from Bacillus subtilis (strain 168).